Consider the following 530-residue polypeptide: Bifunctional purine biosynthesis protein PurH (530 aa).

The MGS-like domain maps to 1–148 (MNNARPIRRA…KNHKDVTIVV (148 aa)).

Belongs to the PurH family.

The enzyme catalyses (6R)-10-formyltetrahydrofolate + 5-amino-1-(5-phospho-beta-D-ribosyl)imidazole-4-carboxamide = 5-formamido-1-(5-phospho-D-ribosyl)imidazole-4-carboxamide + (6S)-5,6,7,8-tetrahydrofolate. The catalysed reaction is IMP + H2O = 5-formamido-1-(5-phospho-D-ribosyl)imidazole-4-carboxamide. It participates in purine metabolism; IMP biosynthesis via de novo pathway; 5-formamido-1-(5-phospho-D-ribosyl)imidazole-4-carboxamide from 5-amino-1-(5-phospho-D-ribosyl)imidazole-4-carboxamide (10-formyl THF route): step 1/1. It functions in the pathway purine metabolism; IMP biosynthesis via de novo pathway; IMP from 5-formamido-1-(5-phospho-D-ribosyl)imidazole-4-carboxamide: step 1/1. The polypeptide is Bifunctional purine biosynthesis protein PurH (Aliivibrio fischeri (strain MJ11) (Vibrio fischeri)).